The primary structure comprises 62 residues: Small ribosomal subunit protein eS30z/eS30y/eS30x (62 aa).

The disordered stretch occupies residues Met-1–Leu-38. Positions Asp-25–Leu-38 are enriched in basic residues.

The protein belongs to the eukaryotic ribosomal protein eS30 family.

This is Small ribosomal subunit protein eS30z/eS30y/eS30x (RPS30A) from Arabidopsis thaliana (Mouse-ear cress).